The sequence spans 210 residues: Ribosomal RNA large subunit methyltransferase E (210 aa).

S-adenosyl-L-methionine contacts are provided by Gly64, Trp66, Asp84, Asp100, and Asp125. The Proton acceptor role is filled by Lys165.

Belongs to the class I-like SAM-binding methyltransferase superfamily. RNA methyltransferase RlmE family.

It is found in the cytoplasm. It carries out the reaction uridine(2552) in 23S rRNA + S-adenosyl-L-methionine = 2'-O-methyluridine(2552) in 23S rRNA + S-adenosyl-L-homocysteine + H(+). Specifically methylates the uridine in position 2552 of 23S rRNA at the 2'-O position of the ribose in the fully assembled 50S ribosomal subunit. In Chromohalobacter salexigens (strain ATCC BAA-138 / DSM 3043 / CIP 106854 / NCIMB 13768 / 1H11), this protein is Ribosomal RNA large subunit methyltransferase E.